The sequence spans 142 residues: DNA-directed RNA polymerases I, II, and III subunit rpabc3 (142 aa).

The segment at 16–40 (DPDGKKFDRVSRFVCYSENYEMDLQ) is non-specific ssDNA binding.

The protein belongs to the eukaryotic RPB8 RNA polymerase subunit family. In terms of assembly, component of the RNA polymerase I (Pol I), RNA polymerase II (Pol II) and RNA polymerase III (Pol III) complexes consisting of at least 13, 12 and 17 subunits, respectively. Directly interacts with POLR2A.

The protein resides in the nucleus. It is found in the nucleolus. Functionally, DNA-dependent RNA polymerase catalyzes the transcription of DNA into RNA using the four ribonucleoside triphosphates as substrates. Common component of RNA polymerases I, II and III which synthesize ribosomal RNA precursors, mRNA precursors and many functional non-coding RNAs, and small RNAs, such as 5S rRNA and tRNAs, respectively. The polypeptide is DNA-directed RNA polymerases I, II, and III subunit rpabc3 (polr2h) (Dictyostelium discoideum (Social amoeba)).